A 563-amino-acid polypeptide reads, in one-letter code: MAVSSFQCPTIFSSSSISGFQCRSDPDLVGSPVGGSSRRRVHASAGISSSFTGDAGLSSRILRFPPNFVRQLSIKARRNCSNIGVAQIVAAKWSNNPSSALPSAAAAAATSSASAVSSAASAAAASSAAAAPVAAAPPVVLKSVDEEVVVAEEGIREKIGSVQLTDSKHSFLSSDGSLTVHAGERLGRGIVTDAITTPVVNTSAYFFKKTAELIDFKEKRSVSFEYGRYGNPTTVVLEDKISALEGAESTLVMASGMCASTVMLLALVPAGGHIVTTTDCYRKTRIFMENFLPKLGITVTVIDPADIAGLEAAVNEFKVSLFFTESPTNPFLRCVDIELVSKICHKRGTLVCIDGTFATPLNQKALALGADLVVHSATKYIGGHNDVLAGCICGSLKLVSEIRNLHHVLGGTLNPNAAYLIIRGMKTLHLRVQQQNSTAFRMAEILEAHPKVSHVYYPGLPSHPEHELAKRQMTGFGGVVSFEIDGDIETTIKFVDSLKIPYIAPSFGGCESIVDQPAIMSYWDLPQEERLKYGIKDNLVRFSFGVEDFEDVKADILQALEAI.

Residues 1–68 constitute a chloroplast transit peptide; sequence MAVSSFQCPT…SRILRFPPNF (68 aa). Pyridoxal 5'-phosphate contacts are provided by tyrosine 226, arginine 228, glycine 256, methionine 257, tyrosine 281, serine 376, and threonine 378. The residue at position 379 (lysine 379) is an N6-(pyridoxal phosphate)lysine.

It belongs to the trans-sulfuration enzymes family. Requires pyridoxal 5'-phosphate as cofactor.

The protein localises to the plastid. The protein resides in the chloroplast. It carries out the reaction O-phospho-L-homoserine + L-cysteine = L,L-cystathionine + phosphate. It catalyses the reaction O-succinyl-L-homoserine + L-cysteine = L,L-cystathionine + succinate + H(+). It participates in amino-acid biosynthesis; L-methionine biosynthesis via de novo pathway; L-cystathionine from O-succinyl-L-homoserine: step 1/1. With respect to regulation, inhibited by propargylglycine. In terms of biological role, catalyzes the first committed step of methionine (Met) biosynthesis. Catalyzes the formation of L-cystathionine from homoserine esters and L-cysteine, via a gamma-replacement reaction. Substrate preference for cystathionine synthesis is O-phospho-L-homoserine (OPH) &gt; O(4)-succinyl-L-homoserine (OSH) &gt;&gt; O-acetyl-L-homoserine (OAH). Is able, at extremely low rate, to catalyze a gamma-elimination of OPH in the absence of cysteine to produce inorganic phosphate (Pi), 2-oxobutanoate and ammonia. This is Cystathionine gamma-synthase 1, chloroplastic from Arabidopsis thaliana (Mouse-ear cress).